Reading from the N-terminus, the 424-residue chain is Na(+), Li(+), K(+)/H(+) antiporter (424 aa).

Transmembrane regions (helical) follow at residues 15 to 35, 42 to 62, 74 to 94, 105 to 125, 141 to 161, 165 to 185, 227 to 247, 274 to 294, 305 to 325, 327 to 347, 367 to 389, and 393 to 415; these read VGEF…AIYF, GLAG…NLFG, MLVS…LANS, VAFT…QAMI, FYTT…VLFF, FELL…LRFY, LLFV…DLVI, TSFG…TVVI, WVFF…PMTS, FWIF…VVGL, AASL…TAWF, and WTFI…MFHL.

Belongs to the major facilitator superfamily.

Its subcellular location is the cell membrane. Norfloxacin transport is inhibited by CCCP. Its function is as follows. Exhibits dual functions as a Na(+)(Li(+)/K(+))/H(+) antiporter and a multidrug efflux pump. Catalyzes the efflux of Na(+), Li(+) and K(+) in exchange for external protons. Shows a preference for Na(+), followed by K(+) and Li(+). Can also function as a multidrug efflux pump. Transports ethidium bromide and norfloxacin. This Planococcus maritimus protein is Na(+), Li(+), K(+)/H(+) antiporter.